The following is a 417-amino-acid chain: Voltage-gated potassium channel Kch (417 aa).

At 1 to 21 (MSHWATFKQTATNLWVTLRHD) the chain is on the cytoplasmic side. Residues 22-41 (ILALAVFLNGLLIFKTIYGM) traverse the membrane as a helical segment. The Periplasmic segment spans residues 42 to 63 (SVNLLDIFHIKAFSELDLSLLA). A helical transmembrane segment spans residues 64-83 (NAPLFMLGVFLVLNSIGLLF). Topologically, residues 84–86 (RAK) are cytoplasmic. The helical transmembrane segment at 87-104 (LAWAISIILLLIALIYTL) threads the bilayer. Residues 105–110 (HFYPWL) lie on the Periplasmic side of the membrane. Residues 111–127 (KFSIGFCIFTLVFLLIL) traverse the membrane as a helical segment. Residues 128 to 140 (RKDFSHSSAAAGT) are Cytoplasmic-facing. The chain crosses the membrane as a helical span at residues 141–160 (IFAFISFTTLLFYSTYGALY). Residues 161 to 199 (LSEGFNPRIESLMTAFYFSIETMSTVGYGDIVPVSESAR) are Periplasmic-facing. The Selectivity filter signature appears at 185–190 (TVGYGD). The helical transmembrane segment at 200–220 (LFTISVIISGITVFATSMTSI) threads the bilayer. At 221 to 417 (FGPLIRGGFN…KADSKESAQK (197 aa)) the chain is on the cytoplasmic side. Positions 243-363 (KDHFIVCGHS…IKMVHPDIIL (121 aa)) constitute an RCK N-terminal domain.

This sequence belongs to the potassium channel family. Dimer.

It localises to the cell inner membrane. Its function is as follows. K(+)-specific ion channel. May play a role in the defense against osmotic shock. This is Voltage-gated potassium channel Kch (kch) from Escherichia coli (strain K12).